A 445-amino-acid chain; its full sequence is tRNA-2-methylthio-N(6)-dimethylallyladenosine synthase (445 aa).

The MTTase N-terminal domain maps to 3–120 (RKLFIQTHGC…LPGLITQAAS (118 aa)). [4Fe-4S] cluster-binding residues include C12, C49, C83, C157, C161, and C164. The Radical SAM core domain occupies 143-375 (SVDGPSAFVS…QQRINQNVQD (233 aa)). A TRAM domain is found at 378 to 442 (RKMVGSTQRI…SNSLLGTDPR (65 aa)).

Belongs to the methylthiotransferase family. MiaB subfamily. Monomer. [4Fe-4S] cluster serves as cofactor.

Its subcellular location is the cytoplasm. It catalyses the reaction N(6)-dimethylallyladenosine(37) in tRNA + (sulfur carrier)-SH + AH2 + 2 S-adenosyl-L-methionine = 2-methylsulfanyl-N(6)-dimethylallyladenosine(37) in tRNA + (sulfur carrier)-H + 5'-deoxyadenosine + L-methionine + A + S-adenosyl-L-homocysteine + 2 H(+). Catalyzes the methylthiolation of N6-(dimethylallyl)adenosine (i(6)A), leading to the formation of 2-methylthio-N6-(dimethylallyl)adenosine (ms(2)i(6)A) at position 37 in tRNAs that read codons beginning with uridine. The polypeptide is tRNA-2-methylthio-N(6)-dimethylallyladenosine synthase (Alcanivorax borkumensis (strain ATCC 700651 / DSM 11573 / NCIMB 13689 / SK2)).